The chain runs to 587 residues: Laccase abr2 (587 aa).

Positions 1-17 (MWYQSASLLGVAAVAQA) are cleaved as a signal peptide. 2 Plastocyanin-like domains span residues 41-137 (IFVN…VHIR) and 168-350 (LVML…ANDG). Asn71 carries N-linked (GlcNAc...) asparagine glycosylation. Cu cation is bound by residues His75, His77, His119, and His121. Residues Asn228, Asn383, Asn420, and Asn462 are each glycosylated (N-linked (GlcNAc...) asparagine). In terms of domain architecture, Plastocyanin-like 3 spans 397–577 (PPYPAISPAS…ILMDGVDVWP (181 aa)). His487 contributes to the Cu cation binding site. The N-linked (GlcNAc...) asparagine glycan is linked to Asn504.

The protein belongs to the multicopper oxidase family.

It localises to the cell surface. Its pathway is pigment biosynthesis; melanin biosynthesis. Its function is as follows. Laccase; part of the gene cluster that mediates the biosynthesis of dihydroxynaphthalene (DHN)-melanin, a bluish-green pigment and a structural component of the conidial wall. The first step of the pathway is the production of the heptaketide naphtopyrone YWA1 by the polyketide synthase alb1 though condensation of acetyl-CoA with malonyl-CoA. The naphtopyrone YWA1 is then converted to the pentaketide 1,3,6,8-tetrahydroxynaphthalene (1,3,6,8-THN) by the heptaketide hydrolyase ayg1 though chain-length shortening. 1,3,6,8-THN is substrate of the hydroxynaphthalene reductase arp2 to yield scytalone. The scytalone dehydratase arp1 then reduces scytalone to 1,3,8-THN. 1,3,8-THN is also substrate of the hydroxynaphthalene reductase arp2 to yield vermelone. Vermelone is further converted by the multicopper oxidase abr1 to 1,8-DHN. Finally the laccase abr2 transforms 1,8-DHN to DHN-melanin. DHN-melanin biosynthesis appears to be initiated in endosomes where early enzymes (abl1, ayg1, arp1 and arp2) localize, with exocytosis leading to melanin deposition on the cell surface where late enzymes (abr1 and abr2) localize. DHN-melanin is an important structural component of the outer cell wall and is required for the presence of conidial surface hydrophobins. DHN-melanin also plays a crucial role in fungal virulence, including a protective role against the host's immune defenses. DHN-melanin also protects conidia against amoeba predation. This chain is Laccase abr2, found in Aspergillus fumigatus (strain ATCC MYA-4609 / CBS 101355 / FGSC A1100 / Af293) (Neosartorya fumigata).